Consider the following 214-residue polypeptide: Octanoyltransferase (214 aa).

Residues 32-207 enclose the BPL/LPL catalytic domain; it reads EDTLDEIWLV…NLLALLNHPP (176 aa). Residues 71-78, 138-140, and 151-153 contribute to the substrate site; these read RGGQVTYH, SLG, and GLA. The active-site Acyl-thioester intermediate is C169.

The protein belongs to the LipB family.

The protein localises to the cytoplasm. The catalysed reaction is octanoyl-[ACP] + L-lysyl-[protein] = N(6)-octanoyl-L-lysyl-[protein] + holo-[ACP] + H(+). Its pathway is protein modification; protein lipoylation via endogenous pathway; protein N(6)-(lipoyl)lysine from octanoyl-[acyl-carrier-protein]: step 1/2. Catalyzes the transfer of endogenously produced octanoic acid from octanoyl-acyl-carrier-protein onto the lipoyl domains of lipoate-dependent enzymes. Lipoyl-ACP can also act as a substrate although octanoyl-ACP is likely to be the physiological substrate. This is Octanoyltransferase from Klebsiella pneumoniae subsp. pneumoniae (strain ATCC 700721 / MGH 78578).